A 185-amino-acid chain; its full sequence is Ribosome-recycling factor (185 aa).

Belongs to the RRF family.

It localises to the cytoplasm. Its function is as follows. Responsible for the release of ribosomes from messenger RNA at the termination of protein biosynthesis. May increase the efficiency of translation by recycling ribosomes from one round of translation to another. In Zymomonas mobilis subsp. mobilis (strain ATCC 31821 / ZM4 / CP4), this protein is Ribosome-recycling factor.